Here is a 69-residue protein sequence, read N- to C-terminus: DNA-directed RNA polymerase subunit epsilon (69 aa).

Belongs to the RNA polymerase subunit epsilon family. In terms of assembly, RNAP is composed of a core of 2 alpha, a beta and a beta' subunit. The core is associated with a delta subunit, and at least one of epsilon or omega. When a sigma factor is associated with the core the holoenzyme is formed, which can initiate transcription.

The catalysed reaction is RNA(n) + a ribonucleoside 5'-triphosphate = RNA(n+1) + diphosphate. Its function is as follows. A non-essential component of RNA polymerase (RNAP). The polypeptide is DNA-directed RNA polymerase subunit epsilon (Shouchella clausii (strain KSM-K16) (Alkalihalobacillus clausii)).